The primary structure comprises 238 residues: Uridylate kinase (238 aa).

12-15 (KLSG) contacts ATP. Glycine 54 is a UMP binding site. Positions 55 and 59 each coordinate ATP. Residues aspartate 74 and 135-142 (TGNPFFTT) contribute to the UMP site. The ATP site is built by threonine 162, tyrosine 168, and aspartate 171.

Belongs to the UMP kinase family. Homohexamer.

It localises to the cytoplasm. It carries out the reaction UMP + ATP = UDP + ADP. Its pathway is pyrimidine metabolism; CTP biosynthesis via de novo pathway; UDP from UMP (UMPK route): step 1/1. With respect to regulation, inhibited by UTP. In terms of biological role, catalyzes the reversible phosphorylation of UMP to UDP. The protein is Uridylate kinase of Janthinobacterium sp. (strain Marseille) (Minibacterium massiliensis).